Consider the following 504-residue polypeptide: MPFGCVTLGDKKNYNQPSEVTDRYDLGQVVKTEEFCEIFRAKDKTTGKLHTCKKFQKRDGRKVRKAAKNEIGILKMVKHPNILQLVDVFVTRKEYFIFLELATGREVFDWILDQGYYSERDTSNVVRQVLEAVAYLHSLKIVHRNLKLENLVYYNRLKNSKIVISDFHLAKLENGLIKEPCGTPEYLAPEVVGRQRYGRPVDCWAIGVIMYILLSGNPPFYEEVEEDDYENHDKNLFRKILAGDYEFDSPYWDDISQAAKDLVTRLMEVEQDQRITAEEAISHEWISGNAASDKNIKDGVCAQIEKNFARAKWKKAVRVTTLMKRLRAPEQSGTAATSDAATPGAAGGAVAAAAGGAAPASGASATVGTGGDAGCAAKSDDMASADRSATPATDGSATPATDGSVTPATDGSITPATDGSVTPATDRSATPATDGRATPATEESTVPAAQSSAAPAAKAAATPEPAVAQPDSTALEGATGQAPPSSKGEEATGCAQESQRVETS.

In terms of domain architecture, Protein kinase spans 24 to 286 (YDLGQVVKTE…AEEAISHEWI (263 aa)). A disordered region spans residues 378 to 504 (KSDDMASADR…AQESQRVETS (127 aa)). Position 384 is a phosphoserine (Ser384). Residues 390–431 (TPATDGSATPATDGSVTPATDGSITPATDGSVTPATDRSATP) show a composition bias toward polar residues. Thr438 and Thr462 each carry phosphothreonine. A compositionally biased stretch (low complexity) spans 445–470 (TVPAAQSSAAPAAKAAATPEPAVAQP).

The protein belongs to the protein kinase superfamily. CAMK Ser/Thr protein kinase family. As to quaternary structure, interacts with calmodulin, in the presence of calcium. It depends on Ca(2+) as a cofactor. Expressed in brain and weakly in eye. Not detected in liver, kidney, spleen, thymus, bladder, aorta, lung, intestine, esophagus, stomach, skeletal muscle, heart, diaphragm, uterus, tail skin, submaxillary gland, prostate, ear, epididymis, placenta, pancreas, ovary, testis, adrenal gland, parathyroid gland, thyroid gland, pineal gland, pituitary and sciatic nerve. In adult hippocampus, predominantly expressed in caudate nucleus, cortex, hypothalamus, olfactory bulb, and midbrain and faintly in pons, brainstem and spinal cord.

Its subcellular location is the cell membrane. It is found in the cytoplasmic vesicle membrane. Functionally, has no detectable kinase activity in vitro. In Rattus norvegicus (Rat), this protein is CaM kinase-like vesicle-associated protein (Camkv).